The chain runs to 173 residues: Flavodoxin (173 aa).

In terms of domain architecture, Flavodoxin-like spans 2-168; that stretch reads IGIFFSTSTG…RVAGWVEAVV (167 aa).

Belongs to the flavodoxin family. Requires FMN as cofactor.

Low-potential electron donor to a number of redox enzymes. This Chondrus crispus (Carrageen Irish moss) protein is Flavodoxin.